A 1025-amino-acid chain; its full sequence is Dihydropyrimidine dehydrogenase [NADP(+)] (1025 aa).

Residues 69–100 (ERGALREAVRCLKCADAPCQKSCPTSLDIKSF) form the 4Fe-4S ferredoxin-type 1 domain. Residues Cys79, Cys82, Cys87, and Cys91 each contribute to the [4Fe-4S] cluster site. Val129 provides a ligand contact to FAD. 4 residues coordinate [4Fe-4S] cluster: Cys130, Cys136, Cys140, and Gln156. FAD is bound by residues 194–198 (GAGPA), 218–226 (EKQEYVGGL), and Arg235. Residues 340-343 (AGDT), 364-365 (RK), and Arg371 each bind NADP(+). Lys384 bears the N6-acetyllysine mark. NADP(+)-binding positions include 437 to 439 (PFG) and 481 to 487 (DVVGMAN). 480 to 489 (GDVVGMANTT) lines the FAD pocket. FMN-binding positions include Ser550 and 574–575 (KT). Substrate is bound by residues Asn609 and 668–670 (NLS). The Proton acceptor role is filled by Cys671. Lys709 is an FMN binding site. 736–737 (NT) is a binding site for substrate. Residues Gly767, 793–795 (TGG), and 816–817 (CS) each bind FMN. At Ser905 the chain carries Phosphoserine. 4Fe-4S ferredoxin-type domains follow at residues 944-976 (VVAL…FDPE) and 978-1007 (HLPT…MVSR). Residues Cys953, Cys956, Cys959, Cys963, Cys986, Cys989, Cys992, and Cys996 each coordinate [4Fe-4S] cluster.

The protein belongs to the dihydropyrimidine dehydrogenase family. Homodimer. FAD serves as cofactor. The cofactor is FMN. It depends on [4Fe-4S] cluster as a cofactor.

It is found in the cytoplasm. It catalyses the reaction 5,6-dihydrouracil + NADP(+) = uracil + NADPH + H(+). The enzyme catalyses 5,6-dihydrothymine + NADP(+) = thymine + NADPH + H(+). Its pathway is amino-acid biosynthesis; beta-alanine biosynthesis. Inactivated by 5-iodouracil. In terms of biological role, involved in pyrimidine base degradation. Catalyzes the reduction of uracil and thymine. Also involved the degradation of the chemotherapeutic drug 5-fluorouracil. This Rattus norvegicus (Rat) protein is Dihydropyrimidine dehydrogenase [NADP(+)].